The following is a 286-amino-acid chain: Pyridoxal kinase PdxY (286 aa).

Ser8 lines the substrate pocket. ATP is bound by residues Asp110 and Glu147. Asp223 is a binding site for substrate.

This sequence belongs to the pyridoxine kinase family. PdxY subfamily. In terms of assembly, homodimer. It depends on Mg(2+) as a cofactor.

It catalyses the reaction pyridoxal + ATP = pyridoxal 5'-phosphate + ADP + H(+). Its pathway is cofactor metabolism; pyridoxal 5'-phosphate salvage; pyridoxal 5'-phosphate from pyridoxal: step 1/1. In terms of biological role, pyridoxal kinase involved in the salvage pathway of pyridoxal 5'-phosphate (PLP). Catalyzes the phosphorylation of pyridoxal to PLP. The protein is Pyridoxal kinase PdxY of Granulibacter bethesdensis (strain ATCC BAA-1260 / CGDNIH1).